Consider the following 427-residue polypeptide: D-inositol 3-phosphate glycosyltransferase 2 (427 aa).

A 1D-myo-inositol 3-phosphate-binding site is contributed by His14. UDP-N-acetyl-alpha-D-glucosamine-binding positions include 20 to 21 (QP) and Gly28. 1D-myo-inositol 3-phosphate contacts are provided by residues 25–30 (DAGGMN), Lys83, Tyr116, Thr140, and Arg160. The UDP-N-acetyl-alpha-D-glucosamine site is built by Arg234, Lys239, and Val300. Mg(2+) contacts are provided by Tyr309, Arg310, and Ala312. UDP-N-acetyl-alpha-D-glucosamine-binding residues include Glu322 and Glu330. Thr336 lines the Mg(2+) pocket.

The protein belongs to the glycosyltransferase group 1 family. MshA subfamily. Homodimer.

The enzyme catalyses 1D-myo-inositol 3-phosphate + UDP-N-acetyl-alpha-D-glucosamine = 1D-myo-inositol 2-acetamido-2-deoxy-alpha-D-glucopyranoside 3-phosphate + UDP + H(+). Functionally, catalyzes the transfer of a N-acetyl-glucosamine moiety to 1D-myo-inositol 3-phosphate to produce 1D-myo-inositol 2-acetamido-2-deoxy-glucopyranoside 3-phosphate in the mycothiol biosynthesis pathway. This is D-inositol 3-phosphate glycosyltransferase 2 from Catenulispora acidiphila (strain DSM 44928 / JCM 14897 / NBRC 102108 / NRRL B-24433 / ID139908).